Consider the following 383-residue polypeptide: tRNA-specific 2-thiouridylase MnmA (383 aa).

ATP-binding positions include 29 to 36 (GMSGGVDS) and M55. An interaction with target base in tRNA region spans residues 115–117 (NPD). C120 acts as the Nucleophile in catalysis. The cysteines at positions 120 and 217 are disulfide-linked. G145 contacts ATP. An interaction with tRNA region spans residues 167-169 (KDQ). C217 serves as the catalytic Cysteine persulfide intermediate. An interaction with tRNA region spans residues 329–330 (RY).

It belongs to the MnmA/TRMU family.

Its subcellular location is the cytoplasm. It catalyses the reaction S-sulfanyl-L-cysteinyl-[protein] + uridine(34) in tRNA + AH2 + ATP = 2-thiouridine(34) in tRNA + L-cysteinyl-[protein] + A + AMP + diphosphate + H(+). Its function is as follows. Catalyzes the 2-thiolation of uridine at the wobble position (U34) of tRNA, leading to the formation of s(2)U34. The polypeptide is tRNA-specific 2-thiouridylase MnmA (Histophilus somni (strain 2336) (Haemophilus somnus)).